Reading from the N-terminus, the 628-residue chain is Keratin, type II cytoskeletal 3 (628 aa).

Residues 1–21 (MSRQASKTSGGGSQGFSGRSA) form a disordered region. The segment at 1–197 (MSRQASKTSG…DPQIGQVKAQ (197 aa)) is head. Residues S13 and S56 each carry the phosphoserine modification. Positions 198-233 (EREQIKTLNNKFASFIDKVRFLEQQNKVLETKWNLL) are coil 1A. In terms of domain architecture, IF rod spans 198-513 (EREQIKTLNN…KLLEGEEYRM (316 aa)). Residues 234–254 (QQQGTSSISGTNNLEPLFENH) are linker 1. Residues 255 to 346 (INYLRSYLDN…TLYDAELSQM (92 aa)) form a coil 1B region. At K296 the chain carries N6,N6-dimethyllysine. Residues 347–370 (QSHISDTSVVLSMDNNRSLDLDSI) form a linker 12 region. Residue S364 is modified to Phosphoserine. Residues 371–509 (IAEVRAQYED…ATYRKLLEGE (139 aa)) are coil 2. The interval 510 to 628 (EYRMSGECPS…SSQSSQRYSR (119 aa)) is tail. Positions 605 to 628 (SSASNRGGSIKFSQSSQSSQRYSR) are disordered. Residues 617-628 (SQSSQSSQRYSR) are compositionally biased toward low complexity.

The protein belongs to the intermediate filament family. Heterotetramer of two type I and two type II keratins. Keratin-3 associates with keratin-12. Cornea specific.

In Homo sapiens (Human), this protein is Keratin, type II cytoskeletal 3 (KRT3).